The sequence spans 151 residues: 3-dehydroquinate dehydratase (151 aa).

Residue tyrosine 26 is the Proton acceptor of the active site. Substrate-binding residues include asparagine 75, histidine 81, and aspartate 88. The active-site Proton donor is the histidine 101. Residues 102–103 and arginine 112 each bind substrate; that span reads LS.

This sequence belongs to the type-II 3-dehydroquinase family. Homododecamer.

The catalysed reaction is 3-dehydroquinate = 3-dehydroshikimate + H2O. Its pathway is metabolic intermediate biosynthesis; chorismate biosynthesis; chorismate from D-erythrose 4-phosphate and phosphoenolpyruvate: step 3/7. Its function is as follows. Catalyzes a trans-dehydration via an enolate intermediate. The protein is 3-dehydroquinate dehydratase of Shewanella halifaxensis (strain HAW-EB4).